The primary structure comprises 142 residues: Large ribosomal subunit protein uL11 (142 aa).

Belongs to the universal ribosomal protein uL11 family. In terms of assembly, part of the ribosomal stalk of the 50S ribosomal subunit. Interacts with L10 and the large rRNA to form the base of the stalk. L10 forms an elongated spine to which L12 dimers bind in a sequential fashion forming a multimeric L10(L12)X complex. One or more lysine residues are methylated.

Functionally, forms part of the ribosomal stalk which helps the ribosome interact with GTP-bound translation factors. The chain is Large ribosomal subunit protein uL11 from Aliivibrio fischeri (strain MJ11) (Vibrio fischeri).